The chain runs to 1070 residues: MRRDGNEGMSTIPGFNQIQFEGFCRFIDQGLTEELYKFPKIEDTDQEIEFQLFVETYQLVEPLIKERDAVYESLTYSSEVYVPAGLIWKPGRDMQEQTIFIGNIPLMNSLGTSIVNGIYRIVINQILQSPGIYYRSESDHNGISVYTGTIISDWGGRSELEIDRKARIWARVSRKQKISILVPSSAMGSNLREILDNVCYPEIFLSFLNDKEKKKIGSKENAILEFYQQFACVGGDPVFSESLCKELQKKFFQQRCELGRIGRRNMNRRLNLDIPQNNTFLLPRDVLAAADHLIGMKFGMGTLDDMNHLKNKRIRSVADLLQDQFGLALIRLENVVRGTICGAIKHKLIPTPQNLVTSTPLTTTYESFFGLHPLSQVLDRTNPLTQMVHGRKLSYLGPGGLTGRTASFRIRDIHSSHYGRICPIDTSEGINVGLIGSLAIYARIGHWGSLESPFYEISDRSKEVQMLYLSPSRDEYYMVAAGNSLALNQSIPEEQVVPARYRQEFLTIAWEQVHFRSIFPFQYFSIGASLIPFIEHNDANRALMSSNMQRQAVPLSQSEKCIVGTGLERQAALDSGVSTIAEHEGKIIYTDTDKIILLGNGDTLSIPLVMYQRSNKNTCMYQKPQVRRGKFIKKGQIVADGAATVGGELALGKNVLVAYMPWEGYNSEDAVLISERLVYGDIYTSFHIRKYEIQTHVTSQGPERITNEIPHLEAHLLRNLDRNGIVMLGSWVETGDILVGKLTPQMAKESSYAPEDRLLRAILGIQVSTSKETCLKLPIGGRGRVIDVRWIQKKGGSSYNPETICVYISQKREIKVGDKVAGRHGNKGIISKILPRQDMPYLQDGTPIDMVFNPLGVPSRMNVGQIFECSLGLAGDLLDRHYRIAPFDERYEQEASRKLVFSELYKASKQTANPWVFEPEYPGKSRIFDGRTGDPFEQPVLIGKSYILKLIHQVDDKIHGRSSGHYALVTQQPLRGRAKQGGQRVGEMEVWALEGFGVAHILQEMLTYKSDHIRARQEVLGTTIVGGTIPSPEDAPESFRLLVRELRSLALELNHFLVSEKNFQINRKEA.

The protein belongs to the RNA polymerase beta chain family. In terms of assembly, in plastids the minimal PEP RNA polymerase catalytic core is composed of four subunits: alpha, beta, beta', and beta''. When a (nuclear-encoded) sigma factor is associated with the core the holoenzyme is formed, which can initiate transcription.

Its subcellular location is the plastid. It localises to the chloroplast. It carries out the reaction RNA(n) + a ribonucleoside 5'-triphosphate = RNA(n+1) + diphosphate. Its function is as follows. DNA-dependent RNA polymerase catalyzes the transcription of DNA into RNA using the four ribonucleoside triphosphates as substrates. The protein is DNA-directed RNA polymerase subunit beta of Platanus occidentalis (Sycamore).